The primary structure comprises 33 residues: ELEPQGPPHLGTDLSKKQGPWAEEEAAYGWMDF.

The disordered stretch occupies residues 1 to 21 (ELEPQGPPHLGTDLSKKQGPW). A Pyrrolidone carboxylic acid modification is found at Q18. Position 28 is a sulfotyrosine (Y28). A Phenylalanine amide modification is found at F33.

Belongs to the gastrin/cholecystokinin family.

Its subcellular location is the secreted. Gastrin stimulates the stomach mucosa to produce and secrete hydrochloric acid and the pancreas to secrete its digestive enzymes. It also stimulates smooth muscle contraction and increases blood circulation and water secretion in the stomach and intestine. The polypeptide is Gastrin (GAST) (Chinchilla chinchilla (Short-tailed chinchilla)).